The following is a 113-amino-acid chain: Large ribosomal subunit protein bL19 (113 aa).

This sequence belongs to the bacterial ribosomal protein bL19 family.

Its function is as follows. This protein is located at the 30S-50S ribosomal subunit interface and may play a role in the structure and function of the aminoacyl-tRNA binding site. This chain is Large ribosomal subunit protein bL19, found in Mycobacteroides abscessus (strain ATCC 19977 / DSM 44196 / CCUG 20993 / CIP 104536 / JCM 13569 / NCTC 13031 / TMC 1543 / L948) (Mycobacterium abscessus).